We begin with the raw amino-acid sequence, 103 residues long: Pseudonajatoxin b homolog (103 aa).

A signal peptide spans 1–21 (MKTLLLTLVVVTIVCLDLGYT). 5 disulfide bridges follow: cysteine 24/cysteine 42, cysteine 35/cysteine 63, cysteine 48/cysteine 52, cysteine 67/cysteine 79, and cysteine 80/cysteine 85.

This sequence belongs to the three-finger toxin family. Long-chain subfamily. Type II alpha-neurotoxin sub-subfamily. In terms of tissue distribution, expressed by the venom gland.

The protein resides in the secreted. Its function is as follows. Binds with high affinity to muscular (alpha-1/CHRNA1) and neuronal (alpha-7/CHRNA7) nicotinic acetylcholine receptor (nAChR) and inhibits acetylcholine from binding to the receptor, thereby impairing neuromuscular and neuronal transmission. The sequence is that of Pseudonajatoxin b homolog from Pseudonaja textilis (Eastern brown snake).